Here is a 274-residue protein sequence, read N- to C-terminus: Photosystem II extrinsic protein O (274 aa).

An N-terminal signal peptide occupies residues 1 to 28 (MRFRPSIVALLSVCFGLLTFLYSGSAFA).

This sequence belongs to the PsbO family. As to quaternary structure, PSII is composed of 1 copy each of membrane proteins PsbA, PsbB, PsbC, PsbD, PsbE, PsbF, PsbH, PsbI, PsbJ, PsbK, PsbL, PsbM, PsbT, PsbX, PsbY, PsbZ, Psb30/Ycf12, peripheral proteins PsbO, CyanoQ (PsbQ), PsbU, PsbV and a large number of cofactors. It forms dimeric complexes. Contacts PsbQ.

It localises to the cellular thylakoid membrane. One of the extrinsic, lumenal subunits of photosystem II (PSII), which stabilize and protect the oxygen-evolving complex. PSII is a light-driven water plastoquinone oxidoreductase, using light energy to abstract electrons from H(2)O, generating a proton gradient subsequently used for ATP formation. Required for dimerization of PSII and for binding of PsbQ to PSII. The chain is Photosystem II extrinsic protein O from Synechocystis sp. (strain ATCC 27184 / PCC 6803 / Kazusa).